The chain runs to 156 residues: ATP synthase subunit b (156 aa).

Residues Ala11–Ala31 traverse the membrane as a helical segment.

It belongs to the ATPase B chain family. As to quaternary structure, F-type ATPases have 2 components, F(1) - the catalytic core - and F(0) - the membrane proton channel. F(1) has five subunits: alpha(3), beta(3), gamma(1), delta(1), epsilon(1). F(0) has three main subunits: a(1), b(2) and c(10-14). The alpha and beta chains form an alternating ring which encloses part of the gamma chain. F(1) is attached to F(0) by a central stalk formed by the gamma and epsilon chains, while a peripheral stalk is formed by the delta and b chains.

It is found in the cell inner membrane. Functionally, f(1)F(0) ATP synthase produces ATP from ADP in the presence of a proton or sodium gradient. F-type ATPases consist of two structural domains, F(1) containing the extramembraneous catalytic core and F(0) containing the membrane proton channel, linked together by a central stalk and a peripheral stalk. During catalysis, ATP synthesis in the catalytic domain of F(1) is coupled via a rotary mechanism of the central stalk subunits to proton translocation. Component of the F(0) channel, it forms part of the peripheral stalk, linking F(1) to F(0). In Enterobacter sp. (strain 638), this protein is ATP synthase subunit b.